Consider the following 335-residue polypeptide: Phosphate acyltransferase (335 aa).

This sequence belongs to the PlsX family. In terms of assembly, homodimer. Probably interacts with PlsY.

It is found in the cytoplasm. The enzyme catalyses a fatty acyl-[ACP] + phosphate = an acyl phosphate + holo-[ACP]. The protein operates within lipid metabolism; phospholipid metabolism. Functionally, catalyzes the reversible formation of acyl-phosphate (acyl-PO(4)) from acyl-[acyl-carrier-protein] (acyl-ACP). This enzyme utilizes acyl-ACP as fatty acyl donor, but not acyl-CoA. In Streptococcus pyogenes serotype M1, this protein is Phosphate acyltransferase.